Consider the following 764-residue polypeptide: 5-methyltetrahydropteroyltriglutamate--homocysteine methyltransferase (764 aa).

5-methyltetrahydropteroyltri-L-glutamate-binding positions include 17 to 20 and Lys117; that span reads RELK. L-homocysteine-binding positions include 436–438 and Glu489; that span reads IGS. Residues 436–438 and Glu489 each bind L-methionine; that span reads IGS. Residues 520 to 521 and Trp566 contribute to the 5-methyltetrahydropteroyltri-L-glutamate site; that span reads RC. Asp604 contributes to the L-homocysteine binding site. L-methionine is bound at residue Asp604. Glu610 serves as a coordination point for 5-methyltetrahydropteroyltri-L-glutamate. Zn(2+) contacts are provided by His646, Cys648, and Glu670. His699 acts as the Proton donor in catalysis. A Zn(2+)-binding site is contributed by Cys731.

Belongs to the vitamin-B12 independent methionine synthase family. Zn(2+) is required as a cofactor.

The enzyme catalyses 5-methyltetrahydropteroyltri-L-glutamate + L-homocysteine = tetrahydropteroyltri-L-glutamate + L-methionine. The protein operates within amino-acid biosynthesis; L-methionine biosynthesis via de novo pathway; L-methionine from L-homocysteine (MetE route): step 1/1. Functionally, catalyzes the transfer of a methyl group from 5-methyltetrahydrofolate to homocysteine resulting in methionine formation. The chain is 5-methyltetrahydropteroyltriglutamate--homocysteine methyltransferase from Baumannia cicadellinicola subsp. Homalodisca coagulata.